A 227-amino-acid polypeptide reads, in one-letter code: Octanoyltransferase (227 aa).

In terms of domain architecture, BPL/LPL catalytic spans 43-218 (ADSQDELWIV…TFTKTLGYQE (176 aa)). Residues 82-89 (RGGQVTYH), 149-151 (SLG), and 162-164 (GLA) contribute to the substrate site. The active-site Acyl-thioester intermediate is Cys-180.

This sequence belongs to the LipB family.

Its subcellular location is the cytoplasm. The enzyme catalyses octanoyl-[ACP] + L-lysyl-[protein] = N(6)-octanoyl-L-lysyl-[protein] + holo-[ACP] + H(+). It participates in protein modification; protein lipoylation via endogenous pathway; protein N(6)-(lipoyl)lysine from octanoyl-[acyl-carrier-protein]: step 1/2. In terms of biological role, catalyzes the transfer of endogenously produced octanoic acid from octanoyl-acyl-carrier-protein onto the lipoyl domains of lipoate-dependent enzymes. Lipoyl-ACP can also act as a substrate although octanoyl-ACP is likely to be the physiological substrate. In Shewanella denitrificans (strain OS217 / ATCC BAA-1090 / DSM 15013), this protein is Octanoyltransferase.